We begin with the raw amino-acid sequence, 99 residues long: Acylphosphatase (99 aa).

The Acylphosphatase-like domain occupies 5-97; it reads IRQVMISGRV…QPGERFSILS (93 aa). Catalysis depends on residues Arg20 and Asn38.

Belongs to the acylphosphatase family.

It carries out the reaction an acyl phosphate + H2O = a carboxylate + phosphate + H(+). The sequence is that of Acylphosphatase (acyP) from Rhodopseudomonas palustris (strain ATCC BAA-98 / CGA009).